The sequence spans 603 residues: Elongation factor 4 (603 aa).

Residues 2 to 184 (NHIRNFSIIA…AVIARVPPPK (183 aa)) enclose the tr-type G domain. GTP contacts are provided by residues 14–19 (DHGKST) and 131–134 (NKMD).

This sequence belongs to the TRAFAC class translation factor GTPase superfamily. Classic translation factor GTPase family. LepA subfamily.

The protein localises to the cell inner membrane. It carries out the reaction GTP + H2O = GDP + phosphate + H(+). Functionally, required for accurate and efficient protein synthesis under certain stress conditions. May act as a fidelity factor of the translation reaction, by catalyzing a one-codon backward translocation of tRNAs on improperly translocated ribosomes. Back-translocation proceeds from a post-translocation (POST) complex to a pre-translocation (PRE) complex, thus giving elongation factor G a second chance to translocate the tRNAs correctly. Binds to ribosomes in a GTP-dependent manner. The polypeptide is Elongation factor 4 (Polaromonas sp. (strain JS666 / ATCC BAA-500)).